Here is a 390-residue protein sequence, read N- to C-terminus: GTPase Obg (390 aa).

The Obg domain maps to 1–159; sequence MKFIDESLIR…RDLLLELMLL (159 aa). Residues 160–333 form the OBG-type G domain; the sequence is ADVGMLGLPN…LCRDIMDFII (174 aa). Residues 166–173, 191–195, 213–216, 283–286, and 314–316 each bind GTP; these read GLPNAGKS, FTTLV, DIPG, NKID, and SAA. Residues Ser-173 and Thr-193 each coordinate Mg(2+).

Belongs to the TRAFAC class OBG-HflX-like GTPase superfamily. OBG GTPase family. As to quaternary structure, monomer. Requires Mg(2+) as cofactor.

The protein localises to the cytoplasm. Its function is as follows. An essential GTPase which binds GTP, GDP and possibly (p)ppGpp with moderate affinity, with high nucleotide exchange rates and a fairly low GTP hydrolysis rate. Plays a role in control of the cell cycle, stress response, ribosome biogenesis and in those bacteria that undergo differentiation, in morphogenesis control. In Haemophilus influenzae (strain 86-028NP), this protein is GTPase Obg.